We begin with the raw amino-acid sequence, 130 residues long: Lysozyme C, kidney isozyme (130 aa).

In terms of domain architecture, C-type lysozyme spans 1-130 (KVFERCELAR…LTSYIQGCGV (130 aa)). 4 cysteine pairs are disulfide-bonded: cysteine 6/cysteine 128, cysteine 30/cysteine 116, cysteine 65/cysteine 81, and cysteine 77/cysteine 95. Active-site residues include glutamate 35 and aspartate 53.

The protein belongs to the glycosyl hydrolase 22 family. As to quaternary structure, monomer.

It is found in the secreted. The catalysed reaction is Hydrolysis of (1-&gt;4)-beta-linkages between N-acetylmuramic acid and N-acetyl-D-glucosamine residues in a peptidoglycan and between N-acetyl-D-glucosamine residues in chitodextrins.. Lysozymes have primarily a bacteriolytic function; those in tissues and body fluids are associated with the monocyte-macrophage system and enhance the activity of immunoagents. This is Lysozyme C, kidney isozyme from Ovis aries (Sheep).